The sequence spans 474 residues: BPI fold-containing family B member 1 (474 aa).

Residues 1-21 (MAGPWIITLLCGLLGATLVQA) form the signal peptide. 4 N-linked (GlcNAc...) asparagine glycosylation sites follow: asparagine 153, asparagine 160, asparagine 263, and asparagine 400. Cysteine 157 and cysteine 200 form a disulfide bridge.

Belongs to the BPI/LBP/Plunc superfamily. Plunc family. Expressed in tongue, lung, thymus, and stomach. Expressed in epithelia of palate, anterior pharynx, trachea and upper bronchi. Expressed in distal tip of papillae in the anterior third of the tongue and in serous cells of von Ebner glands in the posterior third of the tongue. Expressed in columnar epithelium of the duodenum in embryonic gut at 16.5 dpc.

The protein localises to the secreted. Its function is as follows. May play a role in innate immunity in mouth, nose and lungs. Binds bacterial lipopolysaccharide (LPS) and modulates the cellular responses to LPS. May be involved in formation of the left-right axis in the node of the developing embryo. The polypeptide is BPI fold-containing family B member 1 (Bpifb1) (Mus musculus (Mouse)).